The primary structure comprises 279 residues: 30 kDa ribonucleoprotein, chloroplastic (279 aa).

One can recognise an RRM 1 domain in the interval 87-165; the sequence is LKIFVGNLLF…RALRVNSGPP (79 aa). The segment at 156–187 is disordered; it reads RALRVNSGPPPEKRENSSFRENSSFRGGSRGG. Residues 166 to 193 form a linker (Gly-rich) region; it reads PEKRENSSFRENSSFRGGSRGGGSFDSS. Positions 194–272 constitute an RRM 2 domain; sequence NRVYVGNLAW…RAIRVSPAEA (79 aa).

Expressed at high levels in the leaves and seedlings, and lower levels are seen in the stems and roots.

Its subcellular location is the plastid. The protein localises to the chloroplast. In terms of biological role, could be involved in splicing and/or processing of chloroplast RNA's. The sequence is that of 30 kDa ribonucleoprotein, chloroplastic from Nicotiana plumbaginifolia (Leadwort-leaved tobacco).